We begin with the raw amino-acid sequence, 238 residues long: MEVENINVDAFVPAKKAQKRSAVNNQDTEMQVDQATGIEGLVAGSTQASAPPRAKRIKSELRKVSVPPHRYSSLKEHWMKIFTPVVEHMKLQIRFNMKARQVELRVGPETPDIANLQKGADFVKAFLCGFEVDDALALLRLEDLFVETFEIKDVKTLRGDHQSRAIGRLAGKGGRTKFTIENVTKTRIVLADSKIHILGSYQNIQLARRAICNLILGSPPSKVYGNLRSVASRLSERM.

One can recognise a KH domain in the interval 162-211 (QSRAIGRLAGKGGRTKFTIENVTKTRIVLADSKIHILGSYQNIQLARRAI).

This sequence belongs to the PNO1 family.

It localises to the nucleus. Its subcellular location is the nucleolus. This is RNA-binding protein pno1 (l(1)G0004) from Drosophila pseudoobscura pseudoobscura (Fruit fly).